The primary structure comprises 355 residues: Gibberellin 3-beta-dioxygenase 4 (355 aa).

The region spanning 203–303 is the Fe2OG dioxygenase domain; it reads GRGAIRLNHY…RISIAYLWGG (101 aa). Residues His-227, Asp-229, and His-284 each contribute to the Fe cation site. Arg-294 is an active-site residue.

Belongs to the iron/ascorbate-dependent oxidoreductase family. GA3OX subfamily. It depends on L-ascorbate as a cofactor. The cofactor is Fe cation. In terms of tissue distribution, expressed in siliques and in seeds, specifically at the rim of the embryo and the outer integument. Also expressed in flowers. Not detected in roots, stems and leaves.

It carries out the reaction gibberellin A20 + 2-oxoglutarate + O2 = gibberellin A1 + succinate + CO2. It participates in plant hormone biosynthesis; gibberellin biosynthesis. In terms of biological role, converts the inactive gibberellin (GA) precursors GA9 and GA20 in the bioactives gibberellins GA4 and GA1. Involved in the production of bioactive GA for reproductive development. The chain is Gibberellin 3-beta-dioxygenase 4 from Arabidopsis thaliana (Mouse-ear cress).